We begin with the raw amino-acid sequence, 254 residues long: Uridine-cytidine kinase 1 (254 aa).

Residues 1–29 (MASAGGDECEGAAPEADRPHQRPFLIGVS) are disordered. Residue 30 to 38 (GGTASGKST) coordinates ATP. Residues Asp87, Tyr115, His120, Arg146, Arg155, and Gln163 each coordinate substrate. An ATP-binding site is contributed by Asp192. Residues 224–254 (SYKRTFSEPGDHPGMLTSGKRSHLESSSRPH) form a disordered region. Thr228 carries the post-translational modification Phosphothreonine. Ser230 is subject to Phosphoserine. Positions 245 to 254 (SHLESSSRPH) are enriched in basic and acidic residues.

The protein belongs to the uridine kinase family.

The enzyme catalyses uridine + ATP = UMP + ADP + H(+). It carries out the reaction cytidine + ATP = CMP + ADP + H(+). The protein operates within pyrimidine metabolism; CTP biosynthesis via salvage pathway; CTP from cytidine: step 1/3. Its pathway is pyrimidine metabolism; UMP biosynthesis via salvage pathway; UMP from uridine: step 1/1. In terms of biological role, phosphorylates uridine and cytidine to uridine monophosphate and cytidine monophosphate. Does not phosphorylate deoxyribonucleosides or purine ribonucleosides. Can use ATP or GTP as a phosphate donor. The polypeptide is Uridine-cytidine kinase 1 (UCK1) (Macaca fascicularis (Crab-eating macaque)).